Consider the following 251-residue polypeptide: HTH-type transcriptional regulator UlaR (251 aa).

The HTH deoR-type domain occupies 3–58 (EAQRHQILLDMLAQLGFVTVENVIERLGISPATARRDINKLDESGKLKKVRNGAEA). Positions 20 to 39 (VTVENVIERLGISPATARRD) form a DNA-binding region, H-T-H motif.

The protein resides in the cytoplasm. Functionally, represses ulaG and the ulaABCDEF operon. The chain is HTH-type transcriptional regulator UlaR from Salmonella arizonae (strain ATCC BAA-731 / CDC346-86 / RSK2980).